The primary structure comprises 146 residues: Protein disulfide-isomerase 5-1 (146 aa).

An N-terminal signal peptide occupies residues 1-25 (MTLGARLVAPMIILLLFIPIELVKA). The region spanning 26–133 (EVITLTPETF…LKAFVVEETE (108 aa)) is the Thioredoxin domain. Catalysis depends on nucleophile residues Cys55 and Cys58. Cys55 and Cys58 are oxidised to a cystine.

Belongs to the protein disulfide isomerase family.

Its function is as follows. Acts as a protein-folding catalyst that interacts with nascent polypeptides to catalyze the formation, isomerization, and reduction or oxidation of disulfide bonds. This Arabidopsis thaliana (Mouse-ear cress) protein is Protein disulfide-isomerase 5-1 (PDIL5-1).